The sequence spans 316 residues: tRNA pseudouridine synthase B (316 aa).

Catalysis depends on Asp47, which acts as the Nucleophile.

The protein belongs to the pseudouridine synthase TruB family. Type 1 subfamily.

The catalysed reaction is uridine(55) in tRNA = pseudouridine(55) in tRNA. Its function is as follows. Responsible for synthesis of pseudouridine from uracil-55 in the psi GC loop of transfer RNAs. The sequence is that of tRNA pseudouridine synthase B from Aliivibrio fischeri (strain ATCC 700601 / ES114) (Vibrio fischeri).